The sequence spans 594 residues: DNA ligase (594 aa).

NAD(+) contacts are provided by residues 32-36 (DEEYD), 81-82 (SL), and E118. Residue K120 is the N6-AMP-lysine intermediate of the active site. NAD(+)-binding residues include R141, E181, K299, and K323. The Zn(2+) site is built by C417, C420, C436, and C442.

Belongs to the NAD-dependent DNA ligase family. LigA subfamily. Mg(2+) serves as cofactor. The cofactor is Mn(2+).

It catalyses the reaction NAD(+) + (deoxyribonucleotide)n-3'-hydroxyl + 5'-phospho-(deoxyribonucleotide)m = (deoxyribonucleotide)n+m + AMP + beta-nicotinamide D-nucleotide.. In terms of biological role, DNA ligase that catalyzes the formation of phosphodiester linkages between 5'-phosphoryl and 3'-hydroxyl groups in double-stranded DNA using NAD as a coenzyme and as the energy source for the reaction. It is essential for DNA replication and repair of damaged DNA. The protein is DNA ligase of Blochmanniella floridana.